The sequence spans 832 residues: MSPAAALTNGSVRQPDLHLVTDDDFVYEQDIQRSPGSTKPWLAYISYKIQHGTVEEQAFVLERACMQLPRSYKLWKMYLTFRTKHIAKLNAAIFAAEYRKVNSLFERALILLNKMPRIWEMYLKFLMKQPLVTLTRRTFDRALRALPITQHNRIWALYRPFANSAAGPTAVKIWRRYMQVHPEDAEDFIELLYQVGYYTEAAKKYIDVLNNPRFTSKHGKGHFELWSEMVELLVEHATEVEAGYETGIDVERIIRSGIERFADQRGKLWVGLATYWIRRGSFERARDVFEEGITTVMTVRDFTLVFDSYAEFEESVIGAMMEVAGQRAEKGVVDEAADFDLDIRMMRFEHLMDRRPFLLNDVLLRQNPNNVNEWEKRVALWGDNHNEVVNTYTNAIAAVQPKKASGPFHQLWANYAKFYERGGDLRSARIIMEKAVKVPFKSVVELADMWIEWAEMELRNDNFEEAVRIMAKAVQAPKRSTVDYFDETLTPQQRVHKSWKLWSFYVDLVESVGTLEDTKKVYERIFELRIATPQTVVNYANLLEEHKYYEESFKIYERGLDLFSYPVAFELWNMYLTKAVDRKISIERLRDLFEQAVEGCPPKFAKIIYLMYGNLEEERGLARHAMRIYERATRAVSDEDRADMFNFYITKSASNFGLPSTRQIYERAIAALPDDEARDMCLKFADMEKRLGEIDRARAIYGHASQFCDPRTTPAFWTKWEQFEVQHGNEDTFKEMLRIKRAVQAKYNTDVNFIASQALARSQQQKQANGHGSGAEDGDDGVVDAMEALERQARAPAGFVAATEGNIKGDAATTNTTVAANPDAIDIDDMED.

HAT repeat units follow at residues 18-50, 52-84, 96-128, 130-164, 196-235, 245-278, 280-315, 383-421, 423-459, 476-508, 513-545, 547-581, 584-618, 656-690, and 692-726; these read HLVTDDDFVYEQDIQRSPGSTKPWLAYISYKIQ, GTVEEQAFVLERACMQLPRSYKLWKMYLTFRTK, AEYRKVNSLFERALILLNKMPRIWEMYLKFLMK, PLVTLTRRTFDRALRALPITQHNRIWALYRPFANS, GYYTEAAKKYIDVLNNPRFTSKHGKGHFELWSEMVELLVE, ETGIDVERIIRSGIERFADQRGKLWVGLATYWIR, GSFERARDVFEEGITTVMTVRDFTLVFDSYAEFEES, DNHNEVVNTYTNAIAAVQPKKASGPFHQLWANYAKFYER, GDLRSARIIMEKAVKVPFKSVVELADMWIEWAEMELR, APKRSTVDYFDETLTPQQRVHKSWKLWSFYVDL, GTLEDTKKVYERIFELRIATPQTVVNYANLLEE, KYYEESFKIYERGLDLFSYPVAFELWNMYLTKAVD, ISIERLRDLFEQAVEGCPPKFAKIIYLMYGNLEEE, FGLPSTRQIYERAIAALPDDEARDMCLKFADMEKR, and GEIDRARAIYGHASQFCDPRTTPAFWTKWEQFEVQ.

Belongs to the crooked-neck family. In terms of assembly, associated with the spliceosome.

Its subcellular location is the nucleus. Involved in pre-mRNA splicing and cell cycle progression. This is Pre-mRNA-splicing factor SYF1 (SYF1) from Pyricularia oryzae (strain 70-15 / ATCC MYA-4617 / FGSC 8958) (Rice blast fungus).